The primary structure comprises 184 residues: ADP-ribosylation factor-like protein 2 (184 aa).

The N-myristoyl glycine moiety is linked to residue Gly-2. Residues 23–30 (GLDNAGKT), 66–70 (DVGGQ), Gly-68, and 125–128 (NKSD) each bind GTP.

It belongs to the small GTPase superfamily. Arf family.

It localises to the cytoplasm. Its subcellular location is the cell membrane. The protein localises to the cytoskeleton. It is found in the microtubule organizing center. The protein resides in the centrosome. GTP-binding protein that functions in embryogenesis, cytokinesis, germline development and microtubulule cytoskeleton dynamics. This is ADP-ribosylation factor-like protein 2 (evl-20.1) from Caenorhabditis briggsae.